A 663-amino-acid polypeptide reads, in one-letter code: DNA ligase (663 aa).

Residues Asp-33–Asp-37, Ser-82–Ile-83, and Glu-112 contribute to the NAD(+) site. Lys-114 (N6-AMP-lysine intermediate) is an active-site residue. Residues Arg-135, Glu-171, Lys-285, and Lys-309 each contribute to the NAD(+) site. Zn(2+)-binding residues include Cys-403, Cys-406, Cys-419, and Cys-424. Residues Asp-581 to Ser-663 form the BRCT domain.

The protein belongs to the NAD-dependent DNA ligase family. LigA subfamily. Mg(2+) serves as cofactor. Requires Mn(2+) as cofactor.

The catalysed reaction is NAD(+) + (deoxyribonucleotide)n-3'-hydroxyl + 5'-phospho-(deoxyribonucleotide)m = (deoxyribonucleotide)n+m + AMP + beta-nicotinamide D-nucleotide.. In terms of biological role, DNA ligase that catalyzes the formation of phosphodiester linkages between 5'-phosphoryl and 3'-hydroxyl groups in double-stranded DNA using NAD as a coenzyme and as the energy source for the reaction. It is essential for DNA replication and repair of damaged DNA. The polypeptide is DNA ligase (Chlamydia trachomatis serovar L2 (strain ATCC VR-902B / DSM 19102 / 434/Bu)).